The sequence spans 385 residues: ATP synthase subunit a-1 (385 aa).

Residues 1–133 (MRRIFLFDEN…ALNIVGQAAA (133 aa)) constitute a propeptide that is removed on maturation. 7 helical membrane-spanning segments follow: residues 154–174 (FSFT…LLLI), 220–240 (FFPC…QGMI), 249–269 (HFLI…IVGF), 276–296 (FFSF…LVLL), 316–336 (MMAG…MLCM), 339–359 (IFYF…TGLE), and 362–382 (VAIL…NDAI).

The protein belongs to the ATPase A chain family. As to quaternary structure, F-type ATPases have 2 components, CF(1) - the catalytic core - and CF(0) - the membrane proton channel. CF(1) has five subunits: alpha(3), beta(3), gamma(1), delta(1), epsilon(1). CF(0) has three main subunits: a, b and c.

It is found in the mitochondrion inner membrane. Mitochondrial membrane ATP synthase (F(1)F(0) ATP synthase or Complex V) produces ATP from ADP in the presence of a proton gradient across the membrane which is generated by electron transport complexes of the respiratory chain. F-type ATPases consist of two structural domains, F(1) - containing the extramembraneous catalytic core and F(0) - containing the membrane proton channel, linked together by a central stalk and a peripheral stalk. During catalysis, ATP synthesis in the catalytic domain of F(1) is coupled via a rotary mechanism of the central stalk subunits to proton translocation. Key component of the proton channel; it may play a direct role in the translocation of protons across the membrane. The chain is ATP synthase subunit a-1 (ATP6-1) from Arabidopsis thaliana (Mouse-ear cress).